Consider the following 345-residue polypeptide: Phosphoribosylformylglycinamidine cyclo-ligase (345 aa).

It belongs to the AIR synthase family.

It is found in the cytoplasm. It catalyses the reaction 2-formamido-N(1)-(5-O-phospho-beta-D-ribosyl)acetamidine + ATP = 5-amino-1-(5-phospho-beta-D-ribosyl)imidazole + ADP + phosphate + H(+). The protein operates within purine metabolism; IMP biosynthesis via de novo pathway; 5-amino-1-(5-phospho-D-ribosyl)imidazole from N(2)-formyl-N(1)-(5-phospho-D-ribosyl)glycinamide: step 2/2. The polypeptide is Phosphoribosylformylglycinamidine cyclo-ligase (Escherichia coli (strain SE11)).